Consider the following 300-residue polypeptide: NAD kinase (300 aa).

Asp75 acts as the Proton acceptor in catalysis. NAD(+) contacts are provided by residues 75-76 (DG), 149-150 (ND), Arg177, Asp179, 190-195 (TAYALS), Ala214, and Gln248.

This sequence belongs to the NAD kinase family. A divalent metal cation is required as a cofactor.

It localises to the cytoplasm. The catalysed reaction is NAD(+) + ATP = ADP + NADP(+) + H(+). Its function is as follows. Involved in the regulation of the intracellular balance of NAD and NADP, and is a key enzyme in the biosynthesis of NADP. Catalyzes specifically the phosphorylation on 2'-hydroxyl of the adenosine moiety of NAD to yield NADP. The protein is NAD kinase of Burkholderia vietnamiensis (strain G4 / LMG 22486) (Burkholderia cepacia (strain R1808)).